Reading from the N-terminus, the 150-residue chain is Small ribosomal subunit protein uS9 (150 aa).

The protein belongs to the universal ribosomal protein uS9 family.

This Mycolicibacterium smegmatis (strain ATCC 700084 / mc(2)155) (Mycobacterium smegmatis) protein is Small ribosomal subunit protein uS9.